The chain runs to 262 residues: Ribose-5-phosphate isomerase A (262 aa).

Substrate contacts are provided by residues 33 to 36 (TGST), 89 to 92 (DGAD), and 102 to 105 (KGGG). Glu-111 acts as the Proton acceptor in catalysis. Lys-129 contacts substrate.

The protein belongs to the ribose 5-phosphate isomerase family. In terms of assembly, homodimer.

It carries out the reaction aldehydo-D-ribose 5-phosphate = D-ribulose 5-phosphate. It participates in carbohydrate degradation; pentose phosphate pathway; D-ribose 5-phosphate from D-ribulose 5-phosphate (non-oxidative stage): step 1/1. Its function is as follows. Catalyzes the reversible conversion of ribose-5-phosphate to ribulose 5-phosphate. The polypeptide is Ribose-5-phosphate isomerase A (Ruegeria pomeroyi (strain ATCC 700808 / DSM 15171 / DSS-3) (Silicibacter pomeroyi)).